Consider the following 957-residue polypeptide: Dystrophin-related protein 2 (957 aa).

Spectrin repeat units lie at residues 102 to 179 and 231 to 337; these read DLSG…EELE and EHLL…QLQD. The WW domain maps to 358 to 383; it reads WERAISPNKVPYYINHQAQTTCWDHP. The ZZ-type; degenerate zinc-finger motif lies at 605–661; that stretch reads KHQTKCSICRQCPIKGFRYRSLKQFNVDICQTCFLTGRASKGNKLHYPIMEYYTPTT. The Zn(2+) site is built by cysteine 610, cysteine 613, cysteine 634, and cysteine 637. Position 748 is a phosphoserine (serine 748). Residues 876-894 show a composition bias toward low complexity; sequence QPPSESDGNGSAGSSLASS. Residues 876–923 are disordered; that stretch reads QPPSESDGNGSAGSSLASSPRQSEGSHPREKGQTTPDTEVADDVGSKS. Threonine 910 bears the Phosphothreonine mark.

As to quaternary structure, interacts with PRX; this enhances phosphorylation. Identified in a dystroglycan complex that contains at least PRX, DRP2, UTRN, DMD and DAG1. As to expression, detected in quadriceps nerve Schwann cells. Detected in sciatic nerve. Detected in trigeminal nerve Schwann cells (at protein level). Detected in brain and spinal cord.

The protein localises to the postsynaptic density. It localises to the cell projection. It is found in the dendrite. The protein resides in the perikaryon. Its subcellular location is the cell membrane. In terms of biological role, required for normal myelination and for normal organization of the cytoplasm and the formation of Cajal bands in myelinating Schwann cells. Required for normal PRX location at appositions between the abaxonal surface of the myelin sheath and the Schwann cell plasma membrane. Possibly involved in membrane-cytoskeleton interactions of the central nervous system. The polypeptide is Dystrophin-related protein 2 (Drp2) (Mus musculus (Mouse)).